The primary structure comprises 230 residues: Ribonuclease 3 (230 aa).

One can recognise an RNase III domain in the interval 5-125 (YSRFYNILGY…VIGAIYLDSD (121 aa)). Residue E40 participates in Mg(2+) binding. The active site involves D44. Mg(2+) contacts are provided by D111 and E114. E114 is a catalytic residue. The region spanning 153–223 (DSKSKLQEIL…AEKMIEMLSQ (71 aa)) is the DRBM domain.

The protein belongs to the ribonuclease III family. As to quaternary structure, homodimer. The cofactor is Mg(2+).

The protein localises to the cytoplasm. It catalyses the reaction Endonucleolytic cleavage to 5'-phosphomonoester.. In terms of biological role, digests double-stranded RNA. Involved in the processing of primary rRNA transcript to yield the immediate precursors to the large and small rRNAs (23S and 16S). Processes some mRNAs, and tRNAs when they are encoded in the rRNA operon. Processes pre-crRNA and tracrRNA of type II CRISPR loci if present in the organism. The sequence is that of Ribonuclease 3 from Francisella tularensis subsp. tularensis (strain FSC 198).